The chain runs to 90 residues: Probable oxaloacetate decarboxylase gamma chain 2 (90 aa).

Residues 10-32 form a helical membrane-spanning segment; it reads GINLLTLGMGFVFIFLIFLVYAT.

The protein belongs to the OadG family. As to quaternary structure, heterotrimer of an alpha, a beta and a gamma subunit. Na(+) serves as cofactor.

Its subcellular location is the cell membrane. It catalyses the reaction oxaloacetate + 2 Na(+)(in) + H(+) = pyruvate + 2 Na(+)(out) + CO2. Catalyzes the decarboxylation of oxaloacetate coupled to Na(+) translocation. This Vibrio cholerae serotype O1 (strain ATCC 39315 / El Tor Inaba N16961) protein is Probable oxaloacetate decarboxylase gamma chain 2 (oadG2).